Reading from the N-terminus, the 113-residue chain is Large ribosomal subunit protein uL22 (113 aa).

The protein belongs to the universal ribosomal protein uL22 family. Part of the 50S ribosomal subunit.

Its function is as follows. This protein binds specifically to 23S rRNA; its binding is stimulated by other ribosomal proteins, e.g. L4, L17, and L20. It is important during the early stages of 50S assembly. It makes multiple contacts with different domains of the 23S rRNA in the assembled 50S subunit and ribosome. Functionally, the globular domain of the protein is located near the polypeptide exit tunnel on the outside of the subunit, while an extended beta-hairpin is found that lines the wall of the exit tunnel in the center of the 70S ribosome. This is Large ribosomal subunit protein uL22 from Halalkalibacterium halodurans (strain ATCC BAA-125 / DSM 18197 / FERM 7344 / JCM 9153 / C-125) (Bacillus halodurans).